The primary structure comprises 420 residues: NEDD8-specific protease 1 (420 aa).

The span at 257–281 (KSSDSSETSHESSNSNLKKSSESGS) shows a compositional bias: low complexity. Positions 257–420 (KSSDSSETSH…EELVSGDFPF (164 aa)) are disordered. Residues 286–296 (NNHESDKDLHH) show a composition bias toward basic and acidic residues. Positions 297-310 (EGHHHHHHHHHHHH) are enriched in basic residues. Residues 311–324 (SHDDDPSSPAEKKQ) are compositionally biased toward basic and acidic residues. Residues serine 329, serine 340, and serine 351 each carry the phosphoserine modification. A compositionally biased stretch (basic and acidic residues) spans 355–377 (NKEDHLPLLSDEKLDKSAIDKIE).

The protein belongs to the peptidase C48 family. As to quaternary structure, interacts with csn1. It is, however, not a component of the signalosome.

The protein localises to the cytoplasm. Functionally, protease that catalyzes two essential functions in the NEDD8 pathway: processing of full-length NEDD8 to its mature form and deconjugation of NEDD8 from targeted proteins such as the pcu1, pcu2 and pcu4 cullins and other proteins. The chain is NEDD8-specific protease 1 (nep1) from Schizosaccharomyces pombe (strain 972 / ATCC 24843) (Fission yeast).